Reading from the N-terminus, the 392-residue chain is Leucine aminopeptidase 1 (392 aa).

An N-terminal signal peptide occupies residues 1–18 (MKFSQASLLAACLPAISA). The propeptide occupies 19–82 (RFIETAEADN…LGSTRLNAQT (64 aa)). A glycan (N-linked (GlcNAc...) asparagine) is linked at asparagine 174. Positions 182, 201, 240, and 267 each coordinate Zn(2+). A disulfide bond links cysteine 316 and cysteine 320. Histidine 349 contacts Zn(2+).

This sequence belongs to the peptidase M28 family. M28E subfamily. As to quaternary structure, monomer. It depends on Zn(2+) as a cofactor.

It localises to the secreted. Its function is as follows. Extracellular aminopeptidase that allows assimilation of proteinaceous substrates. The sequence is that of Leucine aminopeptidase 1 (LAP1) from Fusarium vanettenii (strain ATCC MYA-4622 / CBS 123669 / FGSC 9596 / NRRL 45880 / 77-13-4) (Fusarium solani subsp. pisi).